We begin with the raw amino-acid sequence, 475 residues long: 23S rRNA (uracil(1939)-C(5))-methyltransferase RlmD (475 aa).

One can recognise a TRAM domain in the interval M1 to E76. [4Fe-4S] cluster-binding residues include C89, C95, C98, and C178. S-adenosyl-L-methionine is bound by residues Q299, F328, N333, E349, D377, and D398. Residue C431 is the Nucleophile of the active site.

It belongs to the class I-like SAM-binding methyltransferase superfamily. RNA M5U methyltransferase family. RlmD subfamily.

It catalyses the reaction uridine(1939) in 23S rRNA + S-adenosyl-L-methionine = 5-methyluridine(1939) in 23S rRNA + S-adenosyl-L-homocysteine + H(+). Functionally, catalyzes the formation of 5-methyl-uridine at position 1939 (m5U1939) in 23S rRNA. This chain is 23S rRNA (uracil(1939)-C(5))-methyltransferase RlmD, found in Polynucleobacter necessarius subsp. necessarius (strain STIR1).